The sequence spans 68 residues: Large ribosomal subunit protein bL33c (68 aa).

It belongs to the bacterial ribosomal protein bL33 family.

The protein localises to the plastid. The chain is Large ribosomal subunit protein bL33c from Cuscuta reflexa (Southern Asian dodder).